The chain runs to 154 residues: Peptidoglycan amidase Tse1 (154 aa).

A disulfide bridge links Cys-7 with Cys-148. Cys-30 acts as the Nucleophile in catalysis. The active-site Proton acceptor is the His-91.

In terms of assembly, forms a heterotetramer with Tsi1 consisting of two Tse1 dimers and two Tsi1 dimers. Formation of the complex inactivates Tse1 enzymatic activity.

It localises to the host membrane. The protein localises to the secreted. The enzyme catalyses Hydrolysis of gamma-D-glutamyl bonds to the L-terminus (position 7) of meso-diaminopimelic acid (meso-A2pm) in 7-(L-Ala-gamma-D-Glu)-meso-A2pm and 7-(L-Ala-gamma-D-Glu)-7-(D-Ala)-meso-A2pm. It is required that the D-terminal amino and carboxy groups of meso-A2pm are unsubstituted.. Functionally, toxin secreted by the H1 type VI (H1-T6SS) secretion system into the periplasm of recipient cells. Degrades peptidoglycan via amidase activity thereby helping itself to compete with other bacteria. To protect itself, the bacterium synthesizes immunity protein Tsi1 that specifically interacts with and inactivates cognate toxin. This Pseudomonas aeruginosa (strain ATCC 15692 / DSM 22644 / CIP 104116 / JCM 14847 / LMG 12228 / 1C / PRS 101 / PAO1) protein is Peptidoglycan amidase Tse1.